The sequence spans 165 residues: Destrin (165 aa).

A2 is modified (N-acetylalanine). An ADF-H domain is found at 4–153 (GVQVADEVCR…NRACIAEKLG (150 aa)). The short motif at 30–34 (KKRKK) is the Nuclear localization signal element.

It belongs to the actin-binding proteins ADF family.

Actin-depolymerizing protein. Severs actin filaments (F-actin) and binds to actin monomers (G-actin). Acts in a pH-independent manner. The chain is Destrin (DSTN) from Gallus gallus (Chicken).